The chain runs to 418 residues: Argininosuccinate synthase (418 aa).

ATP contacts are provided by residues 14-22 (AYSGGLDTS) and alanine 42. Residues tyrosine 94 and serine 99 each coordinate L-citrulline. Glycine 124 is a binding site for ATP. L-aspartate-binding residues include threonine 126, asparagine 130, and aspartate 131. Asparagine 130 serves as a coordination point for L-citrulline. L-citrulline is bound by residues arginine 134, serine 183, serine 192, glutamate 273, and tyrosine 285.

The protein belongs to the argininosuccinate synthase family. Type 1 subfamily. As to quaternary structure, homotetramer.

The protein resides in the cytoplasm. It carries out the reaction L-citrulline + L-aspartate + ATP = 2-(N(omega)-L-arginino)succinate + AMP + diphosphate + H(+). Its pathway is amino-acid biosynthesis; L-arginine biosynthesis; L-arginine from L-ornithine and carbamoyl phosphate: step 2/3. This chain is Argininosuccinate synthase, found in Colwellia psychrerythraea (strain 34H / ATCC BAA-681) (Vibrio psychroerythus).